The sequence spans 371 residues: Peptidyl-prolyl cis-trans isomerase CPR6 (371 aa).

A PPIase cyclophilin-type domain is found at 7–174 (FFDISIGGKP…RDVKIDDCGV (168 aa)). 3 TPR repeats span residues 219–252 (IETV…LKEY), 270–303 (VSIP…EAAD), and 308–341 (AKAL…QPND).

It belongs to the cyclophilin-type PPIase family. PPIase D subfamily. As to quaternary structure, interacts with RPD3.

The protein localises to the cytoplasm. The catalysed reaction is [protein]-peptidylproline (omega=180) = [protein]-peptidylproline (omega=0). PPIases accelerate the folding of proteins. It catalyzes the cis-trans isomerization of proline imidic peptide bonds in oligopeptides. This chain is Peptidyl-prolyl cis-trans isomerase CPR6 (CPR6), found in Saccharomyces cerevisiae (strain ATCC 204508 / S288c) (Baker's yeast).